A 91-amino-acid chain; its full sequence is MWPVLWAAARTYAPYITFPVAFVVGAVGYQLEWFIRGTPEHPVEEQSIQEKREERTLQETMGKDVTQVISLKEKLEFTPKAVLNRNRQEKS.

A helical membrane pass occupies residues 12 to 34; that stretch reads YAPYITFPVAFVVGAVGYQLEWF.

This sequence belongs to the SMIM12 family.

The protein localises to the membrane. The polypeptide is Small integral membrane protein 12-A (smim12-a) (Xenopus laevis (African clawed frog)).